The sequence spans 149 residues: Acyl carrier protein 1, chloroplastic (149 aa).

A chloroplast-targeting transit peptide spans 1-59; the sequence is MAHCLAAVSSFSPSAVRRRLSSQVANVVSSRSSVSFHSRQMSFVSISSRPSSLRFKICC. Positions 69–144 constitute a Carrier domain; that stretch reads KETVDKVCMI…DAANLIEKLV (76 aa). Serine 104 carries the O-(pantetheine 4'-phosphoryl)serine modification.

Belongs to the acyl carrier protein (ACP) family. Post-translationally, 4'-phosphopantetheine is transferred from CoA to a specific serine of apo-ACP by acpS. This modification is essential for activity because fatty acids are bound in thioester linkage to the sulfhydryl of the prosthetic group.

The protein localises to the plastid. It localises to the chloroplast. It functions in the pathway lipid metabolism; fatty acid biosynthesis. In terms of biological role, carrier of the growing fatty acid chain in fatty acid biosynthesis. The sequence is that of Acyl carrier protein 1, chloroplastic (ACL1.1) from Hordeum vulgare (Barley).